The chain runs to 110 residues: Nucleoid-associated protein Sfri_2406 (110 aa).

The protein belongs to the YbaB/EbfC family. As to quaternary structure, homodimer.

The protein localises to the cytoplasm. It localises to the nucleoid. In terms of biological role, binds to DNA and alters its conformation. May be involved in regulation of gene expression, nucleoid organization and DNA protection. In Shewanella frigidimarina (strain NCIMB 400), this protein is Nucleoid-associated protein Sfri_2406.